Consider the following 427-residue polypeptide: UDP-N-acetylglucosamine 1-carboxyvinyltransferase (427 aa).

22 to 23 lines the phosphoenolpyruvate pocket; the sequence is KN. Arg-92 provides a ligand contact to UDP-N-acetyl-alpha-D-glucosamine. Residue Asp-116 is the Proton donor of the active site. 2 residues coordinate UDP-N-acetyl-alpha-D-glucosamine: Asp-312 and Met-334.

Belongs to the EPSP synthase family. MurA subfamily.

It localises to the cytoplasm. It catalyses the reaction phosphoenolpyruvate + UDP-N-acetyl-alpha-D-glucosamine = UDP-N-acetyl-3-O-(1-carboxyvinyl)-alpha-D-glucosamine + phosphate. Its pathway is cell wall biogenesis; peptidoglycan biosynthesis. Its function is as follows. Cell wall formation. Adds enolpyruvyl to UDP-N-acetylglucosamine. This Borrelia garinii subsp. bavariensis (strain ATCC BAA-2496 / DSM 23469 / PBi) (Borreliella bavariensis) protein is UDP-N-acetylglucosamine 1-carboxyvinyltransferase.